Reading from the N-terminus, the 179-residue chain is Protein LDB18 (179 aa).

Its function is as follows. May be involved in protein-linked oligosaccharide phosphorylation since the deletion reduces the negative charge of the cell surface. The polypeptide is Protein LDB18 (LDB18) (Saccharomyces cerevisiae (strain ATCC 204508 / S288c) (Baker's yeast)).